Here is a 290-residue protein sequence, read N- to C-terminus: 4-hydroxybenzoate octaprenyltransferase (290 aa).

Transmembrane regions (helical) follow at residues 33–53 (LWALWVATPGVPPLWILAVFV), 99–119 (LFVVLVLLAFLLVLTLNTMTI), 141–161 (LPQVVLGAAFGWSIPMAFAAV), 163–183 (ESVPLSCWLMFLANILWAVAY), 213–233 (FIIGVLQIGVMVLMALIGWLN), 237–257 (WGYYWSILVAGGLFVYQQKLI), and 268–288 (AFMNNNYVGLVLFLGLAMSYW).

Belongs to the UbiA prenyltransferase family. It depends on Mg(2+) as a cofactor.

Its subcellular location is the cell inner membrane. The enzyme catalyses all-trans-octaprenyl diphosphate + 4-hydroxybenzoate = 4-hydroxy-3-(all-trans-octaprenyl)benzoate + diphosphate. The protein operates within cofactor biosynthesis; ubiquinone biosynthesis. Catalyzes the prenylation of para-hydroxybenzoate (PHB) with an all-trans polyprenyl group. Mediates the second step in the final reaction sequence of ubiquinone-8 (UQ-8) biosynthesis, which is the condensation of the polyisoprenoid side chain with PHB, generating the first membrane-bound Q intermediate 3-octaprenyl-4-hydroxybenzoate. The chain is 4-hydroxybenzoate octaprenyltransferase from Escherichia fergusonii (strain ATCC 35469 / DSM 13698 / CCUG 18766 / IAM 14443 / JCM 21226 / LMG 7866 / NBRC 102419 / NCTC 12128 / CDC 0568-73).